The chain runs to 808 residues: Auxin response factor 4 (808 aa).

Residues 1 to 13 (MPPAAMAPPPPPQ) are compositionally biased toward pro residues. The segment at 1 to 20 (MPPAAMAPPPPPQGSSTGDP) is disordered. A DNA-binding region (TF-B3) is located at residues 129-231 (FCKTLTASDT…ELRVGVRRAM (103 aa)). Residues 342–352 (PSTIPRPDRVS) are compositionally biased toward basic and acidic residues. Disordered regions lie at residues 342-433 (PSTI…DSDV), 661-691 (TAGT…VAST), and 778-808 (QKMN…KSDN). The span at 402 to 432 (AQAQRSQNSTVLQGQEQMTLRSNLTESNDSD) shows a compositional bias: polar residues. One can recognise a PB1 domain in the interval 692 to 785 (RSCTKVHKQG…EVQKMNSKSN (94 aa)). The span at 787–799 (PRKDDSSENEKGH) shows a compositional bias: basic and acidic residues.

Belongs to the ARF family. In terms of assembly, homodimers and heterodimers. Expressed in roots, culms, leaves and young panicles.

The protein localises to the nucleus. Auxin response factors (ARFs) are transcriptional factors that bind specifically to the DNA sequence 5'-TGTCTC-3' found in the auxin-responsive promoter elements (AuxREs). This is Auxin response factor 4 (ARF4) from Oryza sativa subsp. japonica (Rice).